The sequence spans 180 residues: V-type proton ATPase subunit c''1 (180 aa).

The Lumenal segment spans residues 1-26 (MSGVVALGHASSWGAALVRISPYTFS). A helical transmembrane segment spans residues 27-47 (AIGIAISIGVSVLGAAWGIYI). Residues 48–66 (TGSSLIGAAIEAPRITSKN) lie on the Cytoplasmic side of the membrane. Residues 67 to 87 (LISVIFCEAVAIYGVIVAIIL) form a helical membrane-spanning segment. Over 88–110 (QTKLESVPSSKMYDAESLRAGYA) the chain is Lumenal. The chain crosses the membrane as a helical span at residues 111-131 (IFASGIIVGFANLVCGLCVGI). Residues 132–149 (IGSSCALSDAQNSTLFVK) lie on the Cytoplasmic side of the membrane. A helical membrane pass occupies residues 150-170 (ILVIEIFGSALGLFGVIVGII). Topologically, residues 171 to 180 (MSAQATWPTK) are lumenal.

Belongs to the V-ATPase proteolipid subunit family. In terms of assembly, V-ATPase is a heteromultimeric enzyme composed of a peripheral catalytic V1 complex (components A to H) attached to an integral membrane V0 proton pore complex (components: a, c, c'', d and e). The proteolipid components c and c'' are present as a hexameric ring that forms the proton-conducting pore. As to expression, preferentially expressed in roots.

The protein localises to the endoplasmic reticulum membrane. Its subcellular location is the golgi apparatus membrane. Its function is as follows. Proton-conducting pore forming subunit of the membrane integral V0 complex of vacuolar ATPase. V-ATPase is responsible for acidifying a variety of intracellular compartments in eukaryotic cells. The sequence is that of V-type proton ATPase subunit c''1 (VHA-c''1) from Arabidopsis thaliana (Mouse-ear cress).